Here is a 145-residue protein sequence, read N- to C-terminus: Alpha-amylase/trypsin inhibitor CM1 (145 aa).

Positions methionine 1–alanine 25 are cleaved as a signal peptide.

It belongs to the protease inhibitor I6 (cereal trypsin/alpha-amylase inhibitor) family. As to quaternary structure, subunit of the tetrameric inhibitor. As to expression, endosperm.

The protein localises to the secreted. In terms of biological role, alpha-amylase/trypsin inhibitor. It could be involved in insect defense mechanisms. The protein is Alpha-amylase/trypsin inhibitor CM1 of Triticum aestivum (Wheat).